The sequence spans 322 residues: Follistatin-A (322 aa).

The N-terminal stretch at 1 to 32 is a signal peptide; the sequence is MLRMLKRQQLHPGMILLLFWLCYLIEDQKVQA. Residues 33-106 enclose the TB domain; sequence GNCWLQQGKN…TCDNVDCGPG (74 aa). Cystine bridges form between Cys35–Cys58, Cys45–Cys91, Cys59–Cys94, Cys98–Cys109, Cys103–Cys119, Cys121–Cys153, Cys125–Cys146, and Cys135–Cys167. An N-linked (GlcNAc...) asparagine glycan is attached at Asn75. One can recognise a Follistatin-like 1 domain in the interval 97–120; that stretch reads TCDNVDCGPGKRCKMNRRSKPRCV. Kazal-like domains are found at residues 103 to 169, 189 to 244, and 267 to 321; these read CGPG…KCKK, NAYC…KCIK, and RGRC…SCNC. Residue Asn127 is glycosylated (N-linked (GlcNAc...) asparagine). The Follistatin-like 2 domain occupies 170–193; it reads TCRDVLCPGSSTCVVDQTNNAYCV. Cystine bridges form between Cys195–Cys228, Cys199–Cys221, and Cys210–Cys242. The Follistatin-like 3 domain maps to 247–271; it reads SCDDIHCSAGKKCLWDAKMSRGRCA. 3 cysteine pairs are disulfide-bonded: Cys273–Cys305, Cys277–Cys298, and Cys287–Cys319. N-linked (GlcNAc...) asparagine glycosylation occurs at Asn291.

As to quaternary structure, monomer. As to expression, not expressed in the organizer region. Expression in gastrulating embryos is confined to anterior and paraxial regions, which give rise to head mesoderm and the first five somites. In addition, expressed transiently in a subset of cells in the posterior notochord anlage. Later, expression is seen in brain, eyes and somites.

Functionally, binds directly to activin and functions as an activin antagonist. Specific inhibitor of the biosynthesis and secretion of pituitary follicle stimulating hormone (fsh). Inhibits bmp-signaling during later stages of development including late phases of dorsoventral patterning, to refine the early pattern set up by the interaction of chordino and bmp2/4. Not involved in organizer function or early phases of dorsoventral pattern formation. The protein is Follistatin-A (fsta) of Danio rerio (Zebrafish).